Here is a 352-residue protein sequence, read N- to C-terminus: MQTYGNPDTTYGWWAGNSGVANRSGKFIAAHVAHAGLIVFWAGAFTLFELSRFDPSVPMGQQPLIALPHLATLGIGFDADGVLMGDTKPVLAIAIVHLVSSMVLAAGGLLHSLLLPGNLEESEVAKARKFNIEWDNPDKLTFILGHHLIILGFAVILLVEWARVHGVYDPAIGAVRQVEYDLNLAEIWNHQTDFLLIDDLEDVMGGHAFLAFVLITGGAWHIATKQVGEYTKFKGKGLLSAEAVLSWSLAGIGWMAIIAAFWSASNTTVYPVEFFGEPLELKFSISPYWIDTVDLPDGVYTSRAWLANVHYYFGFFFIQGHLWHALRALGFDFKRVTNAISNIDSATVTLKD.

Helical transmembrane passes span 27 to 47 (FIAAHVAHAGLIVFWAGAFTL), 90 to 110 (VLAIAIVHLVSSMVLAAGGLL), 142 to 162 (FILGHHLIILGFAVILLVEWA), 203 to 223 (VMGGHAFLAFVLITGGAWHIA), 243 to 263 (AVLSWSLAGIGWMAIIAAFWS), and 306 to 326 (LANVHYYFGFFFIQGHLWHAL).

This sequence belongs to the PsbB/PsbC family. IsiA/Pcb subfamily. As to quaternary structure, the antenna complex consists of divinyl chlorophylls (a and b) and divinyl chlorophyll a/b binding proteins and binds less divinyl chlorophyll b than does low-light-adapted Prochlorococcus. Also forms complexes with PSII, consisting of a PSII dimer and 4 or 8 PcbA subunits. These complexes are also found under conditions of iron-starvation. Divinyl chlorophyll a serves as cofactor. Divinyl chlorophyll b is required as a cofactor.

It localises to the cellular thylakoid membrane. Functionally, the antenna complex functions as a light receptor, it captures and delivers excitation energy to photosystem II and possibly to photosystem I. The Prochlorales pcb genes are not related to higher plant LHCs. In Prochlorococcus marinus subsp. pastoris (strain CCMP1986 / NIES-2087 / MED4), this protein is Divinyl chlorophyll a/b light-harvesting protein PcbA (pcbA).